A 568-amino-acid polypeptide reads, in one-letter code: 2-succinyl-5-enolpyruvyl-6-hydroxy-3-cyclohexene-1-carboxylate synthase (568 aa).

The protein belongs to the TPP enzyme family. MenD subfamily. As to quaternary structure, homodimer. Mg(2+) serves as cofactor. It depends on Mn(2+) as a cofactor. Thiamine diphosphate is required as a cofactor.

The enzyme catalyses isochorismate + 2-oxoglutarate + H(+) = 5-enolpyruvoyl-6-hydroxy-2-succinyl-cyclohex-3-ene-1-carboxylate + CO2. It functions in the pathway quinol/quinone metabolism; 1,4-dihydroxy-2-naphthoate biosynthesis; 1,4-dihydroxy-2-naphthoate from chorismate: step 2/7. The protein operates within quinol/quinone metabolism; menaquinone biosynthesis. Catalyzes the thiamine diphosphate-dependent decarboxylation of 2-oxoglutarate and the subsequent addition of the resulting succinic semialdehyde-thiamine pyrophosphate anion to isochorismate to yield 2-succinyl-5-enolpyruvyl-6-hydroxy-3-cyclohexene-1-carboxylate (SEPHCHC). The polypeptide is 2-succinyl-5-enolpyruvyl-6-hydroxy-3-cyclohexene-1-carboxylate synthase (Actinobacillus pleuropneumoniae serotype 7 (strain AP76)).